A 121-amino-acid chain; its full sequence is Basic phospholipase A2 homolog BaTX (121 aa).

Cystine bridges form between Cys26–Cys115, Cys28–Cys44, Cys43–Cys95, Cys49–Cys121, Cys50–Cys88, Cys57–Cys81, and Cys75–Cys86. The important for membrane-damaging activities in eukaryotes and bacteria; heparin-binding stretch occupies residues 105-117 (KKYRYYLKPLCKK).

This sequence belongs to the phospholipase A2 family. Group II subfamily. K49 sub-subfamily. Homodimer; non-covalently linked. In terms of tissue distribution, expressed by the venom gland.

The protein localises to the secreted. In terms of biological role, snake venom phospholipase A2 homolog that lacks enzymatic activity. Is myotoxic and displays edema-inducing activities. In vitro, produced time-dependent, irreversible neuromuscular blockade in isolated mouse phrenic nerve-diaphragm and chick biventer cervicis preparations. A model of myotoxic mechanism has been proposed: an apo Lys49-PLA2 is activated by the entrance of a hydrophobic molecule (e.g. fatty acid) at the hydrophobic channel of the protein leading to a reorientation of a monomer. This reorientation causes a transition between 'inactive' to 'active' states, causing alignment of C-terminal and membrane-docking sites (MDoS) side-by-side and putting the membrane-disruption sites (MDiS) in the same plane, exposed to solvent and in a symmetric position for both monomers. The MDoS region stabilizes the toxin on membrane by the interaction of charged residues with phospholipid head groups. Subsequently, the MDiS region destabilizes the membrane with penetration of hydrophobic residues. This insertion causes a disorganization of the membrane, allowing an uncontrolled influx of ions (i.e. calcium and sodium), and eventually triggering irreversible intracellular alterations and cell death. This is Basic phospholipase A2 homolog BaTX from Bothrops alternatus (Urutu).